The primary structure comprises 345 residues: Phosphoribosylformylglycinamidine cyclo-ligase (345 aa).

It belongs to the AIR synthase family.

It localises to the cytoplasm. It catalyses the reaction 2-formamido-N(1)-(5-O-phospho-beta-D-ribosyl)acetamidine + ATP = 5-amino-1-(5-phospho-beta-D-ribosyl)imidazole + ADP + phosphate + H(+). Its pathway is purine metabolism; IMP biosynthesis via de novo pathway; 5-amino-1-(5-phospho-D-ribosyl)imidazole from N(2)-formyl-N(1)-(5-phospho-D-ribosyl)glycinamide: step 2/2. The protein is Phosphoribosylformylglycinamidine cyclo-ligase of Salmonella typhi.